Reading from the N-terminus, the 695-residue chain is Polyribonucleotide nucleotidyltransferase (695 aa).

Residues Asp486 and Asp492 each contribute to the Mg(2+) site. One can recognise a KH domain in the interval 553-612; that stretch reads PRMIVFKINPEKIRDVIGKGGATIRALTEETGTTIDIVDDGTVKIFSADKADGQEAKRRV. The S1 motif domain occupies 622–690; the sequence is GKIYEGRVSR…KQGRVRLSVK (69 aa).

Belongs to the polyribonucleotide nucleotidyltransferase family. In terms of assembly, component of the RNA degradosome, which is a multiprotein complex involved in RNA processing and mRNA degradation. Mg(2+) serves as cofactor.

The protein localises to the cytoplasm. The catalysed reaction is RNA(n+1) + phosphate = RNA(n) + a ribonucleoside 5'-diphosphate. In terms of biological role, involved in mRNA degradation. Catalyzes the phosphorolysis of single-stranded polyribonucleotides processively in the 3'- to 5'-direction. The polypeptide is Polyribonucleotide nucleotidyltransferase (Nitrosococcus oceani (strain ATCC 19707 / BCRC 17464 / JCM 30415 / NCIMB 11848 / C-107)).